Consider the following 185-residue polypeptide: Orotate phosphoribosyltransferase (185 aa).

Residues Arg102, Lys103, Lys106, His108, and 128–136 (DDVITTGGS) contribute to the 5-phospho-alpha-D-ribose 1-diphosphate site. Residues Thr132 and Arg160 each coordinate orotate.

It belongs to the purine/pyrimidine phosphoribosyltransferase family. PyrE subfamily. In terms of assembly, homodimer. Mg(2+) is required as a cofactor.

It carries out the reaction orotidine 5'-phosphate + diphosphate = orotate + 5-phospho-alpha-D-ribose 1-diphosphate. The protein operates within pyrimidine metabolism; UMP biosynthesis via de novo pathway; UMP from orotate: step 1/2. Its function is as follows. Catalyzes the transfer of a ribosyl phosphate group from 5-phosphoribose 1-diphosphate to orotate, leading to the formation of orotidine monophosphate (OMP). The protein is Orotate phosphoribosyltransferase of Leptospira biflexa serovar Patoc (strain Patoc 1 / Ames).